The sequence spans 493 residues: Dipeptidase 3 (493 aa).

Positions 1 to 35 (MQPAGLEGPRALGLRPLGHRLSLLGVLLLVPSLWV) are cleaved as a signal peptide. A compositionally biased stretch (low complexity) spans 41-60 (TPSPSSAPTTPEASNATTAP). A disordered region spans residues 41 to 74 (TPSPSSAPTTPEASNATTAPGIPNDTATSGVTSD). Cystine bridges form between Cys143-Cys222 and Cys294-Cys326. N-linked (GlcNAc...) asparagine glycosylation is present at Asn331. Ser462 carries GPI-anchor amidated serine lipidation. The propeptide at 463–493 (KAPPHPLPGLMATLTSLALILWLCCSGHRAV) is removed in mature form.

This sequence belongs to the metallo-dependent hydrolases superfamily. Peptidase M19 family. As to quaternary structure, homodimer; disulfide-linked. Interacts with TEX101; co-localized on the cell surface of spermatocytes, spermatids, and testicular spermatozoa, co-localized only in cytoplasmic droplets of caput and corpus epididymal sperm. Expressed in testis but not ovary.

It is found in the membrane. Functionally, lacks dipeptidase activity and is unable to hydrolyze cystinyl-bis-glycine. The absence of activity may be due to the inability of serine (instead of aspartate found in DPEP1/2) at position 356 to function as the acid/base catalyst and activate the nucleophilic water/hydroxide. Does not hydrolyze leukotriene D4 (LTD4) into leukotriene E4 (LTE4). Does not hydrolyze the beta-lactam antibiotic imipenem. This chain is Dipeptidase 3 (Dpep3), found in Mus musculus (Mouse).